The sequence spans 318 residues: Acetyl-coenzyme A carboxylase carboxyl transferase subunit beta (318 aa).

The region spanning 25-294 is the CoA carboxyltransferase N-terminal domain; sequence LWSKCSECGT…AVKGELPAPA (270 aa). Positions 29, 32, 48, and 51 each coordinate Zn(2+). The C4-type zinc-finger motif lies at 29–51; sequence CSECGTMLFHRELSDNLNVCTNC. The interval 286–318 is disordered; sequence VKGELPAPAPLESDAETALASDTDPNGAPPSKD.

It belongs to the AccD/PCCB family. As to quaternary structure, acetyl-CoA carboxylase is a heterohexamer composed of biotin carboxyl carrier protein (AccB), biotin carboxylase (AccC) and two subunits each of ACCase subunit alpha (AccA) and ACCase subunit beta (AccD). The cofactor is Zn(2+).

The protein localises to the cytoplasm. The catalysed reaction is N(6)-carboxybiotinyl-L-lysyl-[protein] + acetyl-CoA = N(6)-biotinyl-L-lysyl-[protein] + malonyl-CoA. It functions in the pathway lipid metabolism; malonyl-CoA biosynthesis; malonyl-CoA from acetyl-CoA: step 1/1. In terms of biological role, component of the acetyl coenzyme A carboxylase (ACC) complex. Biotin carboxylase (BC) catalyzes the carboxylation of biotin on its carrier protein (BCCP) and then the CO(2) group is transferred by the transcarboxylase to acetyl-CoA to form malonyl-CoA. This is Acetyl-coenzyme A carboxylase carboxyl transferase subunit beta from Jannaschia sp. (strain CCS1).